The following is a 227-amino-acid chain: Ribose-5-phosphate isomerase A (227 aa).

Substrate-binding positions include 26-29 (TGST), 82-85 (DGAD), and 95-98 (KGGG). E104 functions as the Proton acceptor in the catalytic mechanism. A substrate-binding site is contributed by K122.

It belongs to the ribose 5-phosphate isomerase family. As to quaternary structure, homodimer.

The catalysed reaction is aldehydo-D-ribose 5-phosphate = D-ribulose 5-phosphate. It functions in the pathway carbohydrate degradation; pentose phosphate pathway; D-ribose 5-phosphate from D-ribulose 5-phosphate (non-oxidative stage): step 1/1. Catalyzes the reversible conversion of ribose-5-phosphate to ribulose 5-phosphate. The protein is Ribose-5-phosphate isomerase A of Streptococcus pneumoniae serotype 4 (strain ATCC BAA-334 / TIGR4).